A 234-amino-acid polypeptide reads, in one-letter code: uncharacterized protein (234 aa).

7 helical membrane-spanning segments follow: residues 25–45 (LMGAGVLVSALVSWIMITFFL), 57–77 (LFFLVLWIIPLVMVVSLQGLA), 85–105 (LPIFIGYAAFMGFLISFTLLM), 108–128 (ATDITLAFVTAAAMFFGLSVY), 142–162 (AFGVAVWGLIIAMFLNFFFAS), 163–183 (TGLTILISLVGVVIFAGLIAW), and 203–223 (WAISMALSLYLDFINMFLFLL).

This sequence belongs to the BI1 family.

The protein resides in the cell membrane. This is an uncharacterized protein from Lactococcus lactis subsp. lactis (strain IL1403) (Streptococcus lactis).